The following is a 332-amino-acid chain: Ferredoxin--NADP reductase 1 (332 aa).

The FAD site is built by Asp-35, Lys-43, Phe-48, Val-88, Phe-123, Asp-284, and Thr-325.

This sequence belongs to the ferredoxin--NADP reductase type 2 family. As to quaternary structure, homodimer. It depends on FAD as a cofactor.

The catalysed reaction is 2 reduced [2Fe-2S]-[ferredoxin] + NADP(+) + H(+) = 2 oxidized [2Fe-2S]-[ferredoxin] + NADPH. This Listeria monocytogenes serotype 4b (strain F2365) protein is Ferredoxin--NADP reductase 1.